The chain runs to 89 residues: Small ribosomal subunit protein uS14 (89 aa).

It belongs to the universal ribosomal protein uS14 family. In terms of assembly, part of the 30S ribosomal subunit. Contacts proteins S3 and S10.

Binds 16S rRNA, required for the assembly of 30S particles and may also be responsible for determining the conformation of the 16S rRNA at the A site. The chain is Small ribosomal subunit protein uS14 from Streptococcus pneumoniae serotype 2 (strain D39 / NCTC 7466).